The chain runs to 427 residues: 3-phosphoshikimate 1-carboxyvinyltransferase (427 aa).

3 residues coordinate 3-phosphoshikimate: Lys23, Ser24, and Arg28. Residue Lys23 coordinates phosphoenolpyruvate. Residues Gly97 and Arg125 each coordinate phosphoenolpyruvate. Ser170, Ser171, Gln172, Ser198, Asp314, Asn337, and Lys341 together coordinate 3-phosphoshikimate. Position 172 (Gln172) interacts with phosphoenolpyruvate. The active-site Proton acceptor is Asp314. Residues Arg345, Arg387, and Lys412 each contribute to the phosphoenolpyruvate site.

The protein belongs to the EPSP synthase family. In terms of assembly, monomer.

The protein localises to the cytoplasm. The enzyme catalyses 3-phosphoshikimate + phosphoenolpyruvate = 5-O-(1-carboxyvinyl)-3-phosphoshikimate + phosphate. It participates in metabolic intermediate biosynthesis; chorismate biosynthesis; chorismate from D-erythrose 4-phosphate and phosphoenolpyruvate: step 6/7. Catalyzes the transfer of the enolpyruvyl moiety of phosphoenolpyruvate (PEP) to the 5-hydroxyl of shikimate-3-phosphate (S3P) to produce enolpyruvyl shikimate-3-phosphate and inorganic phosphate. The sequence is that of 3-phosphoshikimate 1-carboxyvinyltransferase from Buchnera aphidicola subsp. Baizongia pistaciae (strain Bp).